A 350-amino-acid chain; its full sequence is GTPase Obg (350 aa).

The Obg domain maps to 1–175 (MFVDNIRIFA…GVFFMELRRI (175 aa)). Residues 176–345 (ADAGLVGYPN…LRNRLDELVG (170 aa)) enclose the OBG-type G domain. Residues 182–189 (GYPNAGKS), 207–211 (FTTLQ), 229–232 (DIPG), 299–302 (NKMD), and 326–328 (SAL) contribute to the GTP site. Mg(2+) is bound by residues Ser-189 and Thr-209.

It belongs to the TRAFAC class OBG-HflX-like GTPase superfamily. OBG GTPase family. In terms of assembly, monomer. Mg(2+) is required as a cofactor.

Its subcellular location is the cytoplasm. An essential GTPase which binds GTP, GDP and possibly (p)ppGpp with moderate affinity, with high nucleotide exchange rates and a fairly low GTP hydrolysis rate. Plays a role in control of the cell cycle, stress response, ribosome biogenesis and in those bacteria that undergo differentiation, in morphogenesis control. The chain is GTPase Obg from Akkermansia muciniphila (strain ATCC BAA-835 / DSM 22959 / JCM 33894 / BCRC 81048 / CCUG 64013 / CIP 107961 / Muc).